Here is a 189-residue protein sequence, read N- to C-terminus: ADP-ribosylation factor H (189 aa).

GTP contacts are provided by residues 34-40, 75-79, and 134-137; these read DGAGKST, DVGGQ, and NKQD.

This sequence belongs to the small GTPase superfamily. Arf family.

Its subcellular location is the golgi apparatus. In terms of biological role, GTP-binding protein that may be involved in protein trafficking. May modulate vesicle budding and uncoating within the Golgi apparatus. This chain is ADP-ribosylation factor H (arrH), found in Dictyostelium discoideum (Social amoeba).